Reading from the N-terminus, the 442-residue chain is Probable carboxypeptidase PADG_04062 (442 aa).

A signal peptide spans 1 to 20 (MKLQYLVALLSVQAVPPVTA). Residue N102 is glycosylated (N-linked (GlcNAc...) asparagine). D160 serves as a coordination point for Zn(2+). The active-site Proton acceptor is E192. Residue E193 coordinates Zn(2+). The N-linked (GlcNAc...) asparagine glycan is linked to N343.

Belongs to the peptidase M20A family. Zn(2+) serves as cofactor.

It is found in the secreted. This chain is Probable carboxypeptidase PADG_04062, found in Paracoccidioides brasiliensis (strain Pb18).